A 147-amino-acid chain; its full sequence is Hemoglobin subunit gamma (147 aa).

Residues 3–147 enclose the Globin domain; the sequence is NFTAEDKAAI…VASALASRYH (145 aa). His-64 and His-93 together coordinate heme b.

It belongs to the globin family. In terms of assembly, heterotetramer of two alpha chains and two gamma chains in fetal hemoglobin (Hb F). As to expression, red blood cells.

In terms of biological role, gamma chains make up the fetal hemoglobin F, in combination with alpha chains. This chain is Hemoglobin subunit gamma (HBG), found in Lagothrix lagotricha (Brown woolly monkey).